A 682-amino-acid polypeptide reads, in one-letter code: Methionine--tRNA ligase (682 aa).

The 'HIGH' region signature appears at 12-22 (PYANGAIHLGH). Zn(2+) contacts are provided by cysteine 143, cysteine 146, cysteine 156, and cysteine 159. The short motif at 328 to 332 (KMSKS) is the 'KMSKS' region element. Lysine 331 is a binding site for ATP. One can recognise a tRNA-binding domain in the interval 580 to 682 (DFAKLDLRVA…EGIRPGMQVK (103 aa)).

This sequence belongs to the class-I aminoacyl-tRNA synthetase family. MetG type 1 subfamily. As to quaternary structure, homodimer. It depends on Zn(2+) as a cofactor.

It is found in the cytoplasm. The catalysed reaction is tRNA(Met) + L-methionine + ATP = L-methionyl-tRNA(Met) + AMP + diphosphate. Its function is as follows. Is required not only for elongation of protein synthesis but also for the initiation of all mRNA translation through initiator tRNA(fMet) aminoacylation. The sequence is that of Methionine--tRNA ligase from Actinobacillus pleuropneumoniae serotype 7 (strain AP76).